A 337-amino-acid chain; its full sequence is Glucan endo-1,3-beta-glucosidase, basic isoform 1 (337 aa).

The active-site Proton donor is E94. Catalysis depends on E239, which acts as the Nucleophile. The propeptide at 315-337 (VSERVWDISAETNSTASSLISEM) is removed in mature form. An N-linked (GlcNAc...) asparagine glycan is attached at N327.

This sequence belongs to the glycosyl hydrolase 17 family.

The protein resides in the vacuole. The enzyme catalyses Hydrolysis of (1-&gt;3)-beta-D-glucosidic linkages in (1-&gt;3)-beta-D-glucans.. Is thought to be an important plant defense-related product against fungal pathogens. The protein is Glucan endo-1,3-beta-glucosidase, basic isoform 1 (GLUB1) of Solanum tuberosum (Potato).